A 120-amino-acid chain; its full sequence is Chaperonin GroEL (120 aa).

23 to 27 (DGTTT) provides a ligand contact to ATP.

The protein belongs to the chaperonin (HSP60) family. As to quaternary structure, forms a cylinder of 14 subunits composed of two heptameric rings stacked back-to-back. Interacts with the co-chaperonin GroES.

The protein resides in the cytoplasm. It catalyses the reaction ATP + H2O + a folded polypeptide = ADP + phosphate + an unfolded polypeptide.. In terms of biological role, together with its co-chaperonin GroES, plays an essential role in assisting protein folding. The GroEL-GroES system forms a nano-cage that allows encapsulation of the non-native substrate proteins and provides a physical environment optimized to promote and accelerate protein folding. The chain is Chaperonin GroEL from Mycobacterium asiaticum.